The following is a 518-amino-acid chain: Hyccin (518 aa).

Disordered regions lie at residues 385–410 (GLRR…MDQL) and 466–492 (VFSG…EGVA). Over residues 393-403 (SSKEKDKEKDA) the composition is skewed to basic and acidic residues. Positions 466–484 (VFSGNQPSSRASSPTSNHV) are enriched in polar residues.

Belongs to the Hyccin family. Component of a phosphatidylinositol 4-kinase (PI4K) complex.

Its subcellular location is the cytoplasm. It is found in the cytosol. The protein localises to the cell membrane. Its function is as follows. Component of a complex required to localize phosphatidylinositol 4-kinase (PI4K) to the plasma membrane. The complex acts as a regulator of phosphatidylinositol 4-phosphate (PtdIns(4)P) synthesis. In Danio rerio (Zebrafish), this protein is Hyccin (hycc1).